Consider the following 699-residue polypeptide: Ubiquitin-like modifier-activating enzyme ATG7 (699 aa).

The GXGXXG motif motif lies at 370-375; the sequence is GAGTLG. Catalysis depends on Cys550, which acts as the Glycyl thioester intermediate. The interval 653–691 is homodimerization; the sequence is ALASRDYVAELSGLAEVQRLAEKAAAEMQWSEDEEGMGE.

Belongs to the ATG7 family. As to quaternary structure, homodimer. Interacts with ATG8 through a thioester bond between Cys-550 and the C-terminal Gly of ATG8 and with ATG12 through a thioester bond between Cys-550 and the C-terminal Gly of ATG12. Also interacts with ATG3.

The protein localises to the cytoplasm. The protein resides in the preautophagosomal structure. E1-like activating enzyme involved in the 2 ubiquitin-like systems required for cytoplasm to vacuole transport (Cvt) and autophagy. Activates ATG12 for its conjugation with ATG5 and ATG8 for its conjugation with phosphatidylethanolamine. Both systems are needed for the ATG8 association to Cvt vesicles and autophagosomes membranes. Autophagy is essential for maintenance of amino acid levels and protein synthesis under nitrogen starvation. Required for selective autophagic degradation of the nucleus (nucleophagy) as well as for mitophagy which contributes to regulate mitochondrial quantity and quality by eliminating the mitochondria to a basal level to fulfill cellular energy requirements and preventing excess ROS production. Required for normal mycelial growth and conidiogenesis. In Sordaria macrospora (strain ATCC MYA-333 / DSM 997 / K(L3346) / K-hell), this protein is Ubiquitin-like modifier-activating enzyme ATG7.